A 156-amino-acid polypeptide reads, in one-letter code: 6,7-dimethyl-8-ribityllumazine synthase (156 aa).

Residues Phe23, 57 to 59, and 81 to 83 each bind 5-amino-6-(D-ribitylamino)uracil; these read AFE and AVI. Residue 86 to 87 coordinates (2S)-2-hydroxy-3-oxobutyl phosphate; the sequence is ST. His89 acts as the Proton donor in catalysis. A 5-amino-6-(D-ribitylamino)uracil-binding site is contributed by Phe114. A (2S)-2-hydroxy-3-oxobutyl phosphate-binding site is contributed by Arg128.

Belongs to the DMRL synthase family.

It catalyses the reaction (2S)-2-hydroxy-3-oxobutyl phosphate + 5-amino-6-(D-ribitylamino)uracil = 6,7-dimethyl-8-(1-D-ribityl)lumazine + phosphate + 2 H2O + H(+). Its pathway is cofactor biosynthesis; riboflavin biosynthesis; riboflavin from 2-hydroxy-3-oxobutyl phosphate and 5-amino-6-(D-ribitylamino)uracil: step 1/2. In terms of biological role, catalyzes the formation of 6,7-dimethyl-8-ribityllumazine by condensation of 5-amino-6-(D-ribitylamino)uracil with 3,4-dihydroxy-2-butanone 4-phosphate. This is the penultimate step in the biosynthesis of riboflavin. The sequence is that of 6,7-dimethyl-8-ribityllumazine synthase from Brachyspira hyodysenteriae (strain ATCC 49526 / WA1).